Here is a 242-residue protein sequence, read N- to C-terminus: Orotidine 5'-phosphate decarboxylase (242 aa).

Substrate contacts are provided by residues D16, K37, 64–73 (DLKFHDIPNT), T128, R190, Q199, G219, and R220. The active-site Proton donor is K66.

Belongs to the OMP decarboxylase family. Type 1 subfamily. Homodimer.

It carries out the reaction orotidine 5'-phosphate + H(+) = UMP + CO2. It participates in pyrimidine metabolism; UMP biosynthesis via de novo pathway; UMP from orotate: step 2/2. Its function is as follows. Catalyzes the decarboxylation of orotidine 5'-monophosphate (OMP) to uridine 5'-monophosphate (UMP). This is Orotidine 5'-phosphate decarboxylase from Prochlorococcus marinus (strain MIT 9312).